Here is a 433-residue protein sequence, read N- to C-terminus: Pyrimidine-nucleoside phosphorylase (433 aa).

Position 81–83 (81–83 (KHS)) interacts with phosphate. K(+)-binding residues include glycine 88 and threonine 90. Residues threonine 92, 108–110 (KMS), and threonine 120 each bind phosphate. Residues arginine 168 and lysine 187 each contribute to the substrate site. K(+) is bound by residues leucine 243, alanine 246, and glutamate 255.

It belongs to the thymidine/pyrimidine-nucleoside phosphorylase family. Homodimer. K(+) serves as cofactor.

It carries out the reaction uridine + phosphate = alpha-D-ribose 1-phosphate + uracil. The enzyme catalyses thymidine + phosphate = 2-deoxy-alpha-D-ribose 1-phosphate + thymine. It catalyses the reaction 2'-deoxyuridine + phosphate = 2-deoxy-alpha-D-ribose 1-phosphate + uracil. Catalyzes phosphorolysis of the pyrimidine nucleosides uridine, thymidine and 2'-deoxyuridine with the formation of the corresponding pyrimidine base and ribose-1-phosphate. This chain is Pyrimidine-nucleoside phosphorylase (pdp), found in Staphylococcus aureus (strain Mu50 / ATCC 700699).